We begin with the raw amino-acid sequence, 1914 residues long: Myosin light chain kinase, smooth muscle (1914 aa).

Glycine 2 carries the N-acetylalanine modification. 2 consecutive Ig-like C2-type domains span residues 33–122 (PAFI…VELT) and 161–249 (PKFA…AELS). Cysteine 182 and cysteine 233 are joined by a disulfide. At tyrosine 231 the chain carries Phosphotyrosine; by ABL1. The tract at residues 286 to 393 (DSLEAAAKSK…TRQPGLGSQD (108 aa)) is disordered. Phosphoserine is present on serine 305. Positions 318–329 (RESKLESCKDSP) are enriched in basic and acidic residues. Residues 331–347 (TAPQTPVLQKTSSSITL) are compositionally biased toward polar residues. Residues serine 343 and serine 365 each carry the phosphoserine modification. Ig-like C2-type domains lie at 414–503 (PKFE…WTLQ) and 514–599 (PSFS…AWVT). 2 cysteine pairs are disulfide-bonded: cysteine 435–cysteine 487 and cysteine 535–cysteine 583. Tyrosine 464 is subject to Phosphotyrosine; by ABL1 and SRC. At tyrosine 471 the chain carries Phosphotyrosine; by SRC. The residue at position 556 (tyrosine 556) is a Phosphotyrosine; by ABL1. Lysine 608 carries the N6-acetyllysine modification. Tyrosine 611 bears the Phosphotyrosine; by ABL1 mark. Ig-like C2-type domains follow at residues 620–711 (PTAP…AVLT) and 721–821 (PWFI…ALPR). A disulfide bridge connects residues cysteine 742 and cysteine 805. Residues tyrosine 792 and tyrosine 846 each carry the phosphotyrosine; by ABL1 modification. 4 repeat units span residues 868-895 (DVRG…VEQL), 896-923 (DFRD…AEQM), 924-951 (DFRA…PQQV), and 952-979 (DFRS…PATP). The 5 X 28 AA approximate tandem repeats stretch occupies residues 868 to 998 (DVRGVLKRRV…KKLPAENGSS (131 aa)). Residues 923–963 (MDFRANLQRQVKPKTVSEEERKVHSPQQVDFRSVLAKKGTS) form an actin-binding (calcium/calmodulin-sensitive) region. The segment at 932 to 1098 (QVKPKTVSEE…KRSESQGTAP (167 aa)) is disordered. Position 947 is a phosphoserine (serine 947). Positions 948 to 963 (PQQVDFRSVLAKKGTS) are calmodulin-binding. A 1-5; truncated repeat occupies 980–998 (DFRSVLGGKKKLPAENGSS). A 2-1; truncated repeat occupies 999 to 1003 (SAETL). The 6 X 12 AA approximate tandem repeats stretch occupies residues 999–1063 (SAETLNAKAV…KPDENLKSAS (65 aa)). 5 consecutive repeat copies span residues 1004–1015 (NAKAVESSKPLS), 1016–1027 (NAQPSGPLKPVG), 1028–1039 (NAKPAETLKPMG), 1040–1051 (NAKPAETLKPMG), and 1052–1063 (NAKPDENLKSAS). Residues 1054–1077 (KPDENLKSASKEELKKDVKNDVNC) are compositionally biased toward basic and acidic residues. Residues 1061-1460 (SASKEELKKD…TVTINTEQKV (400 aa)) form an actin-binding (calcium/calmodulin-insensitive) region. Residues 1098–1186 (PAFKQKLQDV…GQAECSCQVT (89 aa)) enclose the Ig-like C2-type 7 domain. A disulfide bond links cysteine 1119 and cysteine 1170. The interval 1192–1237 (ASENTKAPEMKSRRPKSSLPPVLGTESDATVKKKPAPKTPPKAAMP) is disordered. The Ig-like C2-type 8 domain maps to 1238 to 1326 (PQIIQFPEDQ…GSRQAQVNLT (89 aa)). Residues 1334–1426 (PAGTPCASDI…QESELTTVGE (93 aa)) form the Fibronectin type-III domain. A compositionally biased stretch (polar residues) spans 1413–1422 (SEPSQESELT). The segment at 1413-1446 (SEPSQESELTTVGEKPEEPKDEVEVSDDDEKEPE) is disordered. Positions 1431 to 1445 (PKDEVEVSDDDEKEP) are enriched in acidic residues. Serine 1438 carries the post-translational modification Phosphoserine. Tyrosine 1449 is subject to Phosphotyrosine; by ABL1. Positions 1464 to 1719 (YDIEERLGSG…CTQCLQHPWL (256 aa)) constitute a Protein kinase domain. ATP is bound by residues 1470–1478 (LGSGKFGQV) and lysine 1493. Tyrosine 1575 is subject to Phosphotyrosine; by ABL1. Aspartate 1585 serves as the catalytic Proton acceptor. Tyrosine 1635 is subject to Phosphotyrosine; by ABL1. The interval 1711–1774 (TQCLQHPWLM…SGLSGRKSST (64 aa)) is calmodulin-binding. 5 positions are modified to phosphoserine: serine 1759, serine 1760, serine 1772, serine 1773, and serine 1776. Positions 1767-1787 (LSGRKSSTGSPTSPLNAEKLE) are disordered. The span at 1770–1781 (RKSSTGSPTSPL) shows a compositional bias: polar residues. Threonine 1778 is subject to Phosphothreonine. Serine 1779 is modified (phosphoserine). The Ig-like C2-type 9 domain occupies 1809-1898 (PYFSKTIRDL…GEATCTAELI (90 aa)). A disulfide bridge connects residues cysteine 1830 and cysteine 1882.

The protein belongs to the protein kinase superfamily. CAMK Ser/Thr protein kinase family. As to quaternary structure, all isoforms including Telokin bind calmodulin. Interacts with SVIL. Interacts with CTTN; this interaction is reduced during thrombin-induced endothelial cell (EC) contraction but is promoted by the barrier-protective agonist sphingosine 1-phosphate (S1P) within lamellipodia. A complex made of ABL1, CTTN and MYLK regulates cortical actin-based cytoskeletal rearrangement critical to sphingosine 1-phosphate (S1P)-mediated endothelial cell (EC) barrier enhancement. Binds to NAA10/ARD1 and PTK2B/PYK2. Requires Mg(2+) as cofactor. Ca(2+) serves as cofactor. Post-translationally, can probably be down-regulated by phosphorylation. Tyrosine phosphorylation by ABL1 increases kinase activity, reverses MLCK-mediated inhibition of Arp2/3-mediated actin polymerization, and enhances CTTN-binding. Phosphorylation by SRC at Tyr-464 and Tyr-471 promotes CTTN binding. In terms of processing, the C-terminus is deglutamylated by AGTPBP1/CCP1, AGBL1/CCP4 and AGBL4/CCP6, leading to the formation of Myosin light chain kinase, smooth muscle, deglutamylated form. The consequences of C-terminal deglutamylation are unknown. Acetylated at Lys-608 by NAA10/ARD1 via a calcium-dependent signaling; this acetylation represses kinase activity and reduces tumor cell migration. As to expression, smooth muscle and non-muscle isozymes are expressed in a wide variety of adult and fetal tissues and in cultured endothelium with qualitative expression appearing to be neither tissue- nor development-specific. Non-muscle isoform 2 is the dominant splice variant expressed in various tissues. Telokin has been found in a wide variety of adult and fetal tissues. Accumulates in well differentiated enterocytes of the intestinal epithelium in response to tumor necrosis factor (TNF).

Its subcellular location is the cytoplasm. The protein localises to the cell projection. It localises to the lamellipodium. The protein resides in the cleavage furrow. It is found in the cytoskeleton. Its subcellular location is the stress fiber. It catalyses the reaction L-seryl-[myosin light chain] + ATP = O-phospho-L-seryl-[myosin light chain] + ADP + H(+). The enzyme catalyses L-threonyl-[myosin light chain] + ATP = O-phospho-L-threonyl-[myosin light chain] + ADP + H(+). Isoform 1 is activated by phosphorylation on Tyr-464 and Tyr-471. Isoforms which lack these tyrosine residues are not regulated in this way. All catalytically active isoforms require binding to calcium and calmodulin for activation. Repressed by organometallic pyridylnaphthalimide complexes, wortmannin, ML-7 (a synthetic naphthalenesulphonyl derivative that inhibits the binding of ATP to MLCK) and ML-9. Functionally, calcium/calmodulin-dependent myosin light chain kinase implicated in smooth muscle contraction via phosphorylation of myosin light chains (MLC). Also regulates actin-myosin interaction through a non-kinase activity. Phosphorylates PTK2B/PYK2 and myosin light-chains. Involved in the inflammatory response (e.g. apoptosis, vascular permeability, leukocyte diapedesis), cell motility and morphology, airway hyperreactivity and other activities relevant to asthma. Required for tonic airway smooth muscle contraction that is necessary for physiological and asthmatic airway resistance. Necessary for gastrointestinal motility. Implicated in the regulation of endothelial as well as vascular permeability, probably via the regulation of cytoskeletal rearrangements. In the nervous system it has been shown to control the growth initiation of astrocytic processes in culture and to participate in transmitter release at synapses formed between cultured sympathetic ganglion cells. Critical participant in signaling sequences that result in fibroblast apoptosis. Plays a role in the regulation of epithelial cell survival. Required for epithelial wound healing, especially during actomyosin ring contraction during purse-string wound closure. Mediates RhoA-dependent membrane blebbing. Triggers TRPC5 channel activity in a calcium-dependent signaling, by inducing its subcellular localization at the plasma membrane. Promotes cell migration (including tumor cells) and tumor metastasis. PTK2B/PYK2 activation by phosphorylation mediates ITGB2 activation and is thus essential to trigger neutrophil transmigration during acute lung injury (ALI). May regulate optic nerve head astrocyte migration. Probably involved in mitotic cytoskeletal regulation. Regulates tight junction probably by modulating ZO-1 exchange in the perijunctional actomyosin ring. Mediates burn-induced microvascular barrier injury; triggers endothelial contraction in the development of microvascular hyperpermeability by phosphorylating MLC. Essential for intestinal barrier dysfunction. Mediates Giardia spp.-mediated reduced epithelial barrier function during giardiasis intestinal infection via reorganization of cytoskeletal F-actin and tight junctional ZO-1. Necessary for hypotonicity-induced Ca(2+) entry and subsequent activation of volume-sensitive organic osmolyte/anion channels (VSOAC) in cervical cancer cells. Responsible for high proliferative ability of breast cancer cells through anti-apoptosis. The sequence is that of Myosin light chain kinase, smooth muscle from Homo sapiens (Human).